Reading from the N-terminus, the 206-residue chain is Putative precorrin-2 dehydrogenase (206 aa).

Residues serine 20–valine 21 and lysine 41–glutamate 46 each bind NAD(+).

This sequence belongs to the precorrin-2 dehydrogenase / sirohydrochlorin ferrochelatase family. As to quaternary structure, homodimer.

It carries out the reaction precorrin-2 + NAD(+) = sirohydrochlorin + NADH + 2 H(+). It participates in porphyrin-containing compound metabolism; siroheme biosynthesis; sirohydrochlorin from precorrin-2: step 1/1. Involved in the archaeal biosynthesis of heme. Catalyzes the oxiation of precorrin-2 into sirohydroclorin. The polypeptide is Putative precorrin-2 dehydrogenase (Methanocaldococcus jannaschii (strain ATCC 43067 / DSM 2661 / JAL-1 / JCM 10045 / NBRC 100440) (Methanococcus jannaschii)).